A 139-amino-acid polypeptide reads, in one-letter code: Actin-depolymerizing factor 1 (139 aa).

The ADF-H domain maps to 5–139 (ASGMAVHDDC…GLDVIQSRAN (135 aa)).

This sequence belongs to the actin-binding proteins ADF family.

In terms of biological role, actin-depolymerizing protein. Severs actin filaments (F-actin) and binds to actin monomers. The chain is Actin-depolymerizing factor 1 (ADF1) from Petunia hybrida (Petunia).